A 389-amino-acid chain; its full sequence is Lipid-A-disaccharide synthase (389 aa).

This sequence belongs to the LpxB family.

The catalysed reaction is a lipid X + a UDP-2-N,3-O-bis[(3R)-3-hydroxyacyl]-alpha-D-glucosamine = a lipid A disaccharide + UDP + H(+). The protein operates within bacterial outer membrane biogenesis; LPS lipid A biosynthesis. Functionally, condensation of UDP-2,3-diacylglucosamine and 2,3-diacylglucosamine-1-phosphate to form lipid A disaccharide, a precursor of lipid A, a phosphorylated glycolipid that anchors the lipopolysaccharide to the outer membrane of the cell. This chain is Lipid-A-disaccharide synthase, found in Histophilus somni (strain 2336) (Haemophilus somnus).